Consider the following 146-residue polypeptide: Hemoglobin subunit beta (146 aa).

V1 carries the post-translational modification N-acetylvaline. Residues 2–146 (HLTGEEKAAV…VANALAHKYH (145 aa)) form the Globin domain. T12 carries the post-translational modification Phosphothreonine. At S44 the chain carries Phosphoserine. K59 carries the post-translational modification N6-acetyllysine. Heme b is bound at residue H63. An N6-acetyllysine modification is found at K82. Residue H92 coordinates heme b. C93 bears the S-nitrosocysteine mark. K144 is subject to N6-acetyllysine.

This sequence belongs to the globin family. Heterotetramer of two alpha chains and two beta chains. Red blood cells.

Involved in oxygen transport from the lung to the various peripheral tissues. In Lutra lutra (European river otter), this protein is Hemoglobin subunit beta (HBB).